Reading from the N-terminus, the 1094-residue chain is AP-3 complex subunit beta-1 (1094 aa).

A compositionally biased stretch (polar residues) spans 1–11 (MSSNSFPYNEQ). Disordered stretches follow at residues 1 to 31 (MSSN…ISPS) and 268 to 292 (DNGK…KPYT). Residues Ser276 and Ser609 each carry the phosphoserine modification. The tract at residues 662-811 (PAGKAKQENS…EKKTKQDRTP (150 aa)) is disordered. Basic and acidic residues predominate over residues 666-677 (AKQENSAKKFYS). Acidic residues-rich tracts occupy residues 678–696 (ESEE…ESES) and 705–726 (ESGE…EQDS). Basic and acidic residues-rich tracts occupy residues 727-738 (ESGRESGLENKR) and 748-764 (GKSD…KSKT). Residues Ser750 and Ser752 each carry the phosphoserine modification. Residues 765–777 (SDSSNDESSSIED) show a composition bias toward low complexity. A compositionally biased stretch (acidic residues) spans 778 to 791 (SSSDSESESEPESE). A compositionally biased stretch (basic and acidic residues) spans 792 to 811 (SESRRVTKEKEKKTKQDRTP).

The protein belongs to the adaptor complexes large subunit family. Adaptor protein complex 3 (AP-3) is a heterotetramer composed of two large adaptins (delta-type subunit AP3D1 and beta-type subunit AP3B1 or AP3B2), a medium adaptin (mu-type subunit AP3M1 or AP3M2) and a small adaptin (sigma-type subunit APS1 or AP3S2). AP-3 associates with the BLOC-1 complex. Interacts with KIF3A; interaction is direct; interaction is impaired by pyrophosphorylation of AP3B1. Post-translationally, phosphorylated on serine residues. In terms of processing, pyrophosphorylation by 5-diphosphoinositol pentakisphosphate (5-IP7) impairs interaction with KIF3A. Serine pyrophosphorylation is achieved by Mg(2+)-dependent, but enzyme independent transfer of a beta-phosphate from a inositol pyrophosphate to a pre-phosphorylated serine residue. As to expression, ubiquitously expressed.

Its subcellular location is the cytoplasmic vesicle. The protein resides in the clathrin-coated vesicle membrane. It is found in the golgi apparatus. Functionally, subunit of non-clathrin- and clathrin-associated adaptor protein complex 3 (AP-3) that plays a role in protein sorting in the late-Golgi/trans-Golgi network (TGN) and/or endosomes. The AP complexes mediate both the recruitment of clathrin to membranes and the recognition of sorting signals within the cytosolic tails of transmembrane cargo molecules. AP-3 appears to be involved in the sorting of a subset of transmembrane proteins targeted to lysosomes and lysosome-related organelles. In concert with the BLOC-1 complex, AP-3 is required to target cargos into vesicles assembled at cell bodies for delivery into neurites and nerve terminals. The polypeptide is AP-3 complex subunit beta-1 (AP3B1) (Homo sapiens (Human)).